A 350-amino-acid chain; its full sequence is Small ribosomal subunit biogenesis GTPase RsgA (350 aa).

Positions 1–17 are enriched in polar residues; that stretch reads MSKNKLSKGQQRRVNAN. The segment at 1–33 is disordered; it reads MSKNKLSKGQQRRVNANHQRRLKTSKEKPDYDD. The 170-residue stretch at 104 to 273 folds into the CP-type G domain; that stretch reads TSVLTRPDFY…VIDSPGVREF (170 aa). Residues 160–163 and 214–222 each bind GTP; these read NKID and GQSGVGKSS. Zn(2+) is bound by residues Cys297, Cys302, His304, and Cys310.

Belongs to the TRAFAC class YlqF/YawG GTPase family. RsgA subfamily. Monomer. Associates with 30S ribosomal subunit, binds 16S rRNA. The cofactor is Zn(2+).

The protein resides in the cytoplasm. One of several proteins that assist in the late maturation steps of the functional core of the 30S ribosomal subunit. Helps release RbfA from mature subunits. May play a role in the assembly of ribosomal proteins into the subunit. Circularly permuted GTPase that catalyzes slow GTP hydrolysis, GTPase activity is stimulated by the 30S ribosomal subunit. This chain is Small ribosomal subunit biogenesis GTPase RsgA, found in Escherichia coli (strain SMS-3-5 / SECEC).